A 190-amino-acid chain; its full sequence is Double zinc ribbon protein MJ0416 (190 aa).

The segment at 134–183 (CPNCNNYISDSWKYCAHCGAKLKEEEEEVLRCPNCKRPVQPEWIVCPYCG) adopts a DZANK-type zinc-finger fold.

This is Double zinc ribbon protein MJ0416 from Methanocaldococcus jannaschii (strain ATCC 43067 / DSM 2661 / JAL-1 / JCM 10045 / NBRC 100440) (Methanococcus jannaschii).